The following is a 402-amino-acid chain: Nicotinate phosphoribosyltransferase (402 aa).

Phosphohistidine; by autocatalysis is present on His-224.

Belongs to the NAPRTase family. Transiently phosphorylated on a His residue during the reaction cycle. Phosphorylation strongly increases the affinity for substrates and increases the rate of nicotinate D-ribonucleotide production. Dephosphorylation regenerates the low-affinity form of the enzyme, leading to product release.

The catalysed reaction is nicotinate + 5-phospho-alpha-D-ribose 1-diphosphate + ATP + H2O = nicotinate beta-D-ribonucleotide + ADP + phosphate + diphosphate. It functions in the pathway cofactor biosynthesis; NAD(+) biosynthesis; nicotinate D-ribonucleotide from nicotinate: step 1/1. Catalyzes the synthesis of beta-nicotinate D-ribonucleotide from nicotinate and 5-phospho-D-ribose 1-phosphate at the expense of ATP. The polypeptide is Nicotinate phosphoribosyltransferase (Neisseria meningitidis serogroup C (strain 053442)).